The chain runs to 118 residues: Mitochondrial import inner membrane translocase subunit Tim10 B (118 aa).

The Twin CX3C motif signature appears at 31–55 (CFQRCVPSLHHRALDAEEEACLHSC). Disulfide bonds link cysteine 31–cysteine 55 and cysteine 35–cysteine 51. Residues 89 to 118 (SAVPHATAEQLETSPSRSLPSGNLGKGGAG) form a disordered region. Over residues 98-109 (QLETSPSRSLPS) the composition is skewed to polar residues.

This sequence belongs to the small Tim family. In terms of assembly, component of the TIM22 complex, which core is composed of TIMM22, associated with TIMM10 (TIMM10A and/or TIMM10B), TIMM9, AGK and TIMM29.

It localises to the mitochondrion inner membrane. In terms of biological role, component of the TIM22 complex, a complex that mediates the import and insertion of multi-pass transmembrane proteins into the mitochondrial inner membrane. The TIM22 complex forms a twin-pore translocase that uses the membrane potential as the external driving force. In the TIM22 complex, it may act as a docking point for the soluble 70 kDa complex that guides the target proteins in transit through the aqueous mitochondrial intermembrane space. The polypeptide is Mitochondrial import inner membrane translocase subunit Tim10 B (TIMM10B) (Bos taurus (Bovine)).